A 1508-amino-acid polypeptide reads, in one-letter code: Pleiotropic ABC efflux transporter of multiple drugs CDR1 (1508 aa).

The segment at 1–30 (MSEKPFVDAPPPEDGVAHQVSPHDNGSLSE) is disordered. Residues 1–524 (MSEKPFVDAP…NFLRMKGDPS (524 aa)) lie on the Cytoplasmic side of the membrane. Positions 165 to 415 (DYWHDMRKID…FLDMGYECPQ (251 aa)) constitute an ABC transporter 1 domain. A helical transmembrane segment spans residues 525–545 (IVIFSIFGQGVMGLILSSVFY). Residues 546 to 559 (NLQPTTGSFYYRGA) lie on the Extracellular side of the membrane. A helical membrane pass occupies residues 560–580 (AMFFAVLFNAFASLLEIMSLF). The Cytoplasmic portion of the chain corresponds to 581–608 (EARPIVEKHKKYALYRPSADALASIISE). A helical membrane pass occupies residues 609-629 (LPVKLCMSTCFNFSFYFMVHF). Topologically, residues 630–633 (RRDP) are extracellular. The helical transmembrane segment at 634–654 (GRFFFYWLFCGLCTLCMSHMF) threads the bilayer. Residues 655 to 673 (RSLGAVSTSLAAAMTPATS) lie on the Cytoplasmic side of the membrane. Residues 674–694 (VLLAMVIFTGFVIPIPSMLGW) traverse the membrane as a helical segment. Residues 695-775 (CRWIQYINPV…EYVNAHKWRN (81 aa)) lie on the Extracellular side of the membrane. A helical transmembrane segment spans residues 776–796 (LGIVVAYIVVFLGVYIALTEF). Over 797–1203 (NKGAMQKGEI…TFQQYWRSPG (407 aa)) the chain is Cytoplasmic. The segment at 839-860 (KISYSDAMEKDSGESSTSDDKL) is disordered. Positions 845–860 (AMEKDSGESSTSDDKL) are enriched in basic and acidic residues. Residues 867–1110 (FHWKDLTYQV…GLIDYFEKHG (244 aa)) enclose the ABC transporter 2 domain. 903 to 910 (GASGAGKT) contacts ATP. Residues 1204-1224 (YIYSKFFLVITASLFNGFAFF) form a helical membrane-spanning segment. At 1225 to 1239 (HSGTSQQGLQNQMFS) the chain is on the extracellular side. A helical transmembrane segment spans residues 1240-1260 (MFMFYMPLQTLIQQMLPYYVM). The Cytoplasmic portion of the chain corresponds to 1261 to 1288 (QREIYEVREAPSRTFSWFAFIASQITTE). The helical transmembrane segment at 1289 to 1309 (IPFQVVLGTVAFFCWYYPVGL) threads the bilayer. The Extracellular segment spans residues 1310–1326 (YQNATPTDTVHERGALM). Residues 1327 to 1347 (WLLVTAFYVYTISLGQMVVAF) form a helical membrane-spanning segment. Residues 1348 to 1362 (MEIADNAANMVNLMF) lie on the Cytoplasmic side of the membrane. A helical membrane pass occupies residues 1363-1383 (IMCLNFCGVLATPEALPGFWI). The Extracellular portion of the chain corresponds to 1384-1475 (FMYRCNPFTY…HAVYSERWRN (92 aa)). Residues 1476-1496 (FGIFIAFIAINMIGTIFFYWL) form a helical membrane-spanning segment. The Cytoplasmic segment spans residues 1497 to 1508 (ARVPKSSKSKNH).

This sequence belongs to the ABC transporter superfamily.

The protein resides in the cell membrane. It carries out the reaction fluconazole(in) + ATP + H2O = fluconazole(out) + ADP + phosphate + H(+). The enzyme catalyses itraconazole(in) + ATP + H2O = itraconazole(out) + ADP + phosphate + H(+). The catalysed reaction is voriconazole(in) + ATP + H2O = voriconazole(out) + ADP + phosphate + H(+). The bis-benzodioxolylindolinone azoffluxin acts as an inhibitor of the transporter activity. Clorgyline analogs M19 and M25 inhibit the transcporter activity by uncoupling CDR1 ATPase activity from the active transport of substrates. Activity is also inhibited by beauvericin and oligomycin. In terms of biological role, pleiotropic ABC efflux transporter that confers resistance to numerous chemicals including itraconazole, fluconazole, voriconazole and posaconazole. The protein is Pleiotropic ABC efflux transporter of multiple drugs CDR1 of Candidozyma auris (Yeast).